Here is a 452-residue protein sequence, read N- to C-terminus: Exodeoxyribonuclease 7 large subunit (452 aa).

This sequence belongs to the XseA family. In terms of assembly, heterooligomer composed of large and small subunits.

The protein resides in the cytoplasm. It catalyses the reaction Exonucleolytic cleavage in either 5'- to 3'- or 3'- to 5'-direction to yield nucleoside 5'-phosphates.. In terms of biological role, bidirectionally degrades single-stranded DNA into large acid-insoluble oligonucleotides, which are then degraded further into small acid-soluble oligonucleotides. This is Exodeoxyribonuclease 7 large subunit from Bordetella avium (strain 197N).